The chain runs to 230 residues: Acetyltransferase (230 aa).

Positions 143–230 constitute an N-acetyltransferase domain; the sequence is RYLDGKVICD…RVAVYKARQT (88 aa).

It participates in mycotoxin biosynthesis. Acetyltransferase; part of the satratoxin SC3 cluster involved in the biosynthesis of satratoxins, trichothecene mycotoxins that are associated with human food poisonings. Satratoxins are suggested to be made by products of multiple gene clusters (SC1, SC2 and SC3) that encode 21 proteins in all, including polyketide synthases, acetyltransferases, and other enzymes expected to modify the trichothecene skeleton. SC1 encodes 10 proteins, SAT1 to SAT10. The largest are SAT8, which encodes a putative polyketide synthase (PKS) with a conventional non-reducing architecture, and SAT10, a putative protein containing four ankyrin repeats and thus may be involved in protein scaffolding. The putative short-chain reductase SAT3 may assist the PKS in some capacity. SAT6 contains a secretory lipase domain and acts probably as a trichothecene esterase. SAT5 encodes a putative acetyltransferase, and so, with SAT6, may affect endogenous protection from toxicity. The probable transcription factor SAT9 may regulate the expression of the SC1 cluster. SC2 encodes proteins SAT11 to SAT16, the largest of which encodes the putative reducing PKS SAT13. SAT11 is a cytochrome P450 monooxygenase, while SAT14 and SAT16 are probable acetyltransferases. The SC2 cluster may be regulated by the transcription factor SAT15. SC3 is a small cluster that encodes 5 proteins, SAT17 to SAT21. SAT21 is a putative MFS-type transporter which may have a role in exporting secondary metabolites. The four other proteins putatively encoded in SC3 include the taurine hydroxylase-like protein SAT17, the O-methyltransferase SAT18, the acetyltransferase SAT19, and the Cys6-type zinc finger SAT20, the latter being probably involved in regulation of SC3 expression. The polypeptide is Acetyltransferase (Stachybotrys chartarum (strain CBS 109288 / IBT 7711) (Toxic black mold)).